Consider the following 329-residue polypeptide: Putative HTH-type transcriptional regulatory protein APE_0778 (329 aa).

Residues 142–200 (LREKRLEKGLSLGHLAYMLKTSRKSIYEYERGVMSPSVEKAEKLVDILGEEILEPIDIL) form the HTH cro/C1-type domain. Residues 153–172 (LGHLAYMLKTSRKSIYEYER) constitute a DNA-binding region (H-T-H motif).

The chain is Putative HTH-type transcriptional regulatory protein APE_0778 from Aeropyrum pernix (strain ATCC 700893 / DSM 11879 / JCM 9820 / NBRC 100138 / K1).